The sequence spans 406 residues: Argininosuccinate synthase (406 aa).

ATP contacts are provided by residues alanine 14 to serine 22 and alanine 41. L-citrulline-binding residues include tyrosine 92 and serine 97. ATP is bound at residue glycine 122. Positions 124, 128, and 129 each coordinate L-aspartate. Asparagine 128 is an L-citrulline binding site. L-citrulline-binding residues include arginine 132, serine 181, serine 190, glutamate 266, and tyrosine 278.

This sequence belongs to the argininosuccinate synthase family. Type 1 subfamily. In terms of assembly, homotetramer.

The protein resides in the cytoplasm. The catalysed reaction is L-citrulline + L-aspartate + ATP = 2-(N(omega)-L-arginino)succinate + AMP + diphosphate + H(+). Its pathway is amino-acid biosynthesis; L-arginine biosynthesis; L-arginine from L-ornithine and carbamoyl phosphate: step 2/3. The protein is Argininosuccinate synthase of Geobacter sulfurreducens (strain ATCC 51573 / DSM 12127 / PCA).